A 250-amino-acid polypeptide reads, in one-letter code: Acetylglutamate kinase (250 aa).

Residues 41–42, arginine 63, and asparagine 156 each bind substrate; that span reads GG.

This sequence belongs to the acetylglutamate kinase family. ArgB subfamily.

It localises to the cytoplasm. It carries out the reaction N-acetyl-L-glutamate + ATP = N-acetyl-L-glutamyl 5-phosphate + ADP. The protein operates within amino-acid biosynthesis; L-arginine biosynthesis; N(2)-acetyl-L-ornithine from L-glutamate: step 2/4. Catalyzes the ATP-dependent phosphorylation of N-acetyl-L-glutamate. In Listeria monocytogenes serotype 4b (strain CLIP80459), this protein is Acetylglutamate kinase.